We begin with the raw amino-acid sequence, 98 residues long: MSDDTGDVIDELFAVIEDRKANLPEDSYTASLFTHEKGENAVLEKLGEETTELILAAKDDDTEELAHESADIVYHLLVLLSMKEMDIDDLRAELAKRR.

It belongs to the PRA-PH family.

Its subcellular location is the cytoplasm. It carries out the reaction 1-(5-phospho-beta-D-ribosyl)-ATP + H2O = 1-(5-phospho-beta-D-ribosyl)-5'-AMP + diphosphate + H(+). Its pathway is amino-acid biosynthesis; L-histidine biosynthesis; L-histidine from 5-phospho-alpha-D-ribose 1-diphosphate: step 2/9. The protein is Phosphoribosyl-ATP pyrophosphatase of Haloarcula marismortui (strain ATCC 43049 / DSM 3752 / JCM 8966 / VKM B-1809) (Halobacterium marismortui).